The chain runs to 148 residues: Large ribosomal subunit protein bL9 (148 aa).

This sequence belongs to the bacterial ribosomal protein bL9 family.

Binds to the 23S rRNA. The chain is Large ribosomal subunit protein bL9 from Acetivibrio thermocellus (strain ATCC 27405 / DSM 1237 / JCM 9322 / NBRC 103400 / NCIMB 10682 / NRRL B-4536 / VPI 7372) (Clostridium thermocellum).